A 325-amino-acid chain; its full sequence is DDB1- and CUL4-associated factor 7 homolog (325 aa).

WD repeat units lie at residues 62–104 (EHPY…RSIK), 115–155 (EFCA…AKTQ), 158–197 (AHDK…HSTI), and 247–287 (FHKS…KPIE).

Belongs to the WD repeat DCAF7 family.

This Dictyostelium discoideum (Social amoeba) protein is DDB1- and CUL4-associated factor 7 homolog (wdr68).